Here is a 290-residue protein sequence, read N- to C-terminus: 33 kDa chaperonin (290 aa).

Intrachain disulfides connect Cys-231-Cys-233 and Cys-263-Cys-266.

It belongs to the HSP33 family. Post-translationally, under oxidizing conditions two disulfide bonds are formed involving the reactive cysteines. Under reducing conditions zinc is bound to the reactive cysteines and the protein is inactive.

It is found in the cytoplasm. Functionally, redox regulated molecular chaperone. Protects both thermally unfolding and oxidatively damaged proteins from irreversible aggregation. Plays an important role in the bacterial defense system toward oxidative stress. The protein is 33 kDa chaperonin of Thermotoga sp. (strain RQ2).